The following is a 310-amino-acid chain: Protein YIP5 (310 aa).

The interval 1–84 (MPSNNSSFLD…VIGQNDNDGL (84 aa)) is disordered. A compositionally biased stretch (acidic residues) spans 10–22 (DIDDDLEGVDDFG). Residues 35 to 57 (DSPNMNNSTAGKGSEFYNTTGSK) show a composition bias toward polar residues. Position 60 is a phosphoserine (Ser-60). The next 5 membrane-spanning stretches (helical) occupy residues 131–151 (TDLY…FTMS), 181–201 (LHSI…TMQV), 220–240 (LISV…ILNI), 249–269 (TVQA…SYFL), and 290–310 (SIIV…FIIF).

The protein belongs to the YIP1 family. In terms of assembly, interacts with SNX3, TVP18, TVP23, YIP1 and YIP4. Interacts with SEC4; The C-terminal cysteines in the Rab GTPase SEC4 are essential for the interaction. Interacts with YPT1, YPT6, YPT7, YPT10, YPT11, YPT31, YPT32 and YPT52; These proteins are all Rab GTPases.

Its subcellular location is the membrane. Functionally, possible role in vesicle-mediated transport. May be involved in proper membrane localization of Rab GTPases. In Saccharomyces cerevisiae (strain ATCC 204508 / S288c) (Baker's yeast), this protein is Protein YIP5 (YIP5).